The primary structure comprises 424 residues: Phosphomethylpyrimidine synthase (424 aa).

Residues M94, Y123, H162, 184-186 (SRG), 225-228 (NGMR), and E264 each bind substrate. H268 serves as a coordination point for Zn(2+). Y291 is a substrate binding site. H332 lines the Zn(2+) pocket. C406, C409, and C413 together coordinate [4Fe-4S] cluster.

Belongs to the ThiC family. [4Fe-4S] cluster serves as cofactor.

It catalyses the reaction 5-amino-1-(5-phospho-beta-D-ribosyl)imidazole + S-adenosyl-L-methionine = 4-amino-2-methyl-5-(phosphooxymethyl)pyrimidine + CO + 5'-deoxyadenosine + formate + L-methionine + 3 H(+). Its pathway is cofactor biosynthesis; thiamine diphosphate biosynthesis. Catalyzes the synthesis of the hydroxymethylpyrimidine phosphate (HMP-P) moiety of thiamine from aminoimidazole ribotide (AIR) in a radical S-adenosyl-L-methionine (SAM)-dependent reaction. The polypeptide is Phosphomethylpyrimidine synthase (Methanoculleus marisnigri (strain ATCC 35101 / DSM 1498 / JR1)).